A 217-amino-acid polypeptide reads, in one-letter code: Probable ribonuclease P protein subunit 1 (217 aa).

Belongs to the eukaryotic/archaeal RNase P protein component 1 family.

It is found in the nucleus. Its subcellular location is the nucleolus. It carries out the reaction Endonucleolytic cleavage of RNA, removing 5'-extranucleotides from tRNA precursor.. Functionally, part of ribonuclease P, a protein complex that generates mature tRNA molecules by cleaving their 5'-ends. This is Probable ribonuclease P protein subunit 1 from Schizosaccharomyces pombe (strain 972 / ATCC 24843) (Fission yeast).